The following is a 264-amino-acid chain: MTLEILLVNDDGIYSNGLLALKNVLSSEFDANVTVVAPTNQQSGIGRAISFFEPLRITKTKLSDCSEGYAVSGTPSDCVVLGIYQVLKKVPDFVISGINIGENLGTEITTSGTLGAAFEGSHHGAKAFACSLQVTADHLKFKEGESPIEFLNAANVFKKVFEKFLDSEFPCDVLNVNIPEDATLNTPVEITKLAKKMYTTHVEERIDPRSRSYYWIDGYPIMEEEDGTDVYAIRRKKHVSLTPLTLDTTIKNIELFQEIYKKKF.

4 residues coordinate a divalent metal cation: D10, D11, S43, and N99.

Belongs to the SurE nucleotidase family. It depends on a divalent metal cation as a cofactor.

The protein localises to the cytoplasm. It carries out the reaction a ribonucleoside 5'-phosphate + H2O = a ribonucleoside + phosphate. Its function is as follows. Nucleotidase that shows phosphatase activity on nucleoside 5'-monophosphates. This chain is 5'-nucleotidase SurE, found in Methanococcus vannielii (strain ATCC 35089 / DSM 1224 / JCM 13029 / OCM 148 / SB).